A 318-amino-acid chain; its full sequence is MRTTAVILSGPRDLGLQTIQLNEPAPGDIVVEITHSGISTGTEKLFYTGQMPPFPGMGYPLVPGYEAAGEVVEAAPDTGFRPGDRVFVPGSNCFAPTDAGPIRGLFGAATKRLVTPAHRAVRIDPALEAEGALLALAATARHALAGLNHVLPDLIVGHGTLGRLLARLTIAAGGEPPVVWETKAERRRHAEGYEVIDPATDQRRDYRSIYDASGDPKLIDSLVMRLAKGGEIVLAGFYTEPVAFTFVPAFMKEARLRIAAEWQPEDMVATRALIESGALSLANLITHTRPASEAAEAYATAFSDPDCLKMILDWRATA.

The protein operates within porphyrin-containing compound metabolism; bacteriochlorophyll biosynthesis (light-independent). In terms of biological role, this protein catalyzes the penultimate step in bacteriochlorophyll a biosynthesis. The polypeptide is 2-desacetyl-2-hydroxyethyl bacteriochlorophyllide A dehydrogenase (bchC) (Cereibacter sphaeroides (strain ATCC 17023 / DSM 158 / JCM 6121 / CCUG 31486 / LMG 2827 / NBRC 12203 / NCIMB 8253 / ATH 2.4.1.) (Rhodobacter sphaeroides)).